The primary structure comprises 306 residues: MATITAKMVGDLRAKTDAPMMECKKALTEADGNMEKAEELLRVKLGNKASKAASRVTAEGVVASAVSGSTGALIEVNCETDFVSKNDSFLAFVQACVNLVVEHNPADVAALSALPLAMEDFGPTVEDVRKGLIGKIGENLAIRRFKRYGDGGSLAHYLHGVRIGVMVEYSGDAVAAKDVAMHIAAMKPVSLTSADVSADLIEKERAVAAGKAAEDAKAAEAAGKPAQSAEIVAKRIEGSIQKFLKEVSLFNQTFVKNDKQTVEQMLKAAGTTVKGFTMYVVGEGIEKKQDDFAAEVAAQVAAAKGQ.

The involved in Mg(2+) ion dislocation from EF-Tu stretch occupies residues 80 to 83 (TDFV).

Belongs to the EF-Ts family.

The protein localises to the cytoplasm. Its function is as follows. Associates with the EF-Tu.GDP complex and induces the exchange of GDP to GTP. It remains bound to the aminoacyl-tRNA.EF-Tu.GTP complex up to the GTP hydrolysis stage on the ribosome. The sequence is that of Elongation factor Ts from Leptothrix cholodnii (strain ATCC 51168 / LMG 8142 / SP-6) (Leptothrix discophora (strain SP-6)).